The following is a 77-amino-acid chain: Acyl carrier protein (77 aa).

One can recognise a Carrier domain in the interval 2-77 (SDVAKRVKEI…DAIDYITEHT (76 aa)). The residue at position 37 (serine 37) is an O-(pantetheine 4'-phosphoryl)serine.

The protein belongs to the acyl carrier protein (ACP) family. 4'-phosphopantetheine is transferred from CoA to a specific serine of apo-ACP by AcpS. This modification is essential for activity because fatty acids are bound in thioester linkage to the sulfhydryl of the prosthetic group.

It is found in the cytoplasm. It participates in lipid metabolism; fatty acid biosynthesis. Its function is as follows. Carrier of the growing fatty acid chain in fatty acid biosynthesis. This Trichlorobacter lovleyi (strain ATCC BAA-1151 / DSM 17278 / SZ) (Geobacter lovleyi) protein is Acyl carrier protein.